The sequence spans 94 residues: Large ribosomal subunit protein eL36 (94 aa).

The segment covering 1 to 25 has biased composition (basic residues); that stretch reads MKNAYKKVRVRYPVKRPDVKRKQRG. The disordered stretch occupies residues 1-30; that stretch reads MKNAYKKVRVRYPVKRPDVKRKQRGPRAET.

It belongs to the eukaryotic ribosomal protein eL36 family. In terms of assembly, component of the large ribosomal subunit.

The protein resides in the cytoplasm. This Encephalitozoon cuniculi (strain GB-M1) (Microsporidian parasite) protein is Large ribosomal subunit protein eL36 (RPL36).